We begin with the raw amino-acid sequence, 561 residues long: Serine palmitoyltransferase 2 (561 aa).

Residues 57–77 (PYYISLLTYLNYLILIILGHV) traverse the membrane as a helical segment. The residue at position 366 (Lys-366) is an N6-(pyridoxal phosphate)lysine. The helical transmembrane segment at 443–463 (LGFIVYGVADSPVIPLLLYCP) threads the bilayer.

This sequence belongs to the class-II pyridoxal-phosphate-dependent aminotransferase family. In terms of assembly, LCB1 and LCB2 encode essential subunits of the enzyme and form a heterodimer. Component of the SPOTS complex, at least composed of LCB1/2 (LCB1 and/or LCB2), ORM1/2 (ORM1 and/or ORM2), SAC1 and TSC3. Interacts with LCB1 and TSC3. Requires pyridoxal 5'-phosphate as cofactor.

It localises to the cytoplasm. It is found in the endoplasmic reticulum. The protein localises to the membrane. It catalyses the reaction L-serine + hexadecanoyl-CoA + H(+) = 3-oxosphinganine + CO2 + CoA. The protein operates within lipid metabolism; sphingolipid metabolism. In terms of biological role, catalytic subunit of serine palmitoyltransferase (SPT), which catalyzes the committed step in the synthesis of sphingolipids, the condensation of serine with palmitoyl CoA to form the long chain base 3-ketosphinganine. This Saccharomyces cerevisiae (strain ATCC 204508 / S288c) (Baker's yeast) protein is Serine palmitoyltransferase 2 (LCB2).